The chain runs to 195 residues: Dephospho-CoA kinase (195 aa).

Residues 3 to 195 enclose the DPCK domain; that stretch reads IIGLTGSIAM…FSIIENLLKN (193 aa). ATP is bound at residue 11–16; sequence AMGKST.

This sequence belongs to the CoaE family.

Its subcellular location is the cytoplasm. The enzyme catalyses 3'-dephospho-CoA + ATP = ADP + CoA + H(+). It functions in the pathway cofactor biosynthesis; coenzyme A biosynthesis; CoA from (R)-pantothenate: step 5/5. Functionally, catalyzes the phosphorylation of the 3'-hydroxyl group of dephosphocoenzyme A to form coenzyme A. This Bartonella quintana (strain Toulouse) (Rochalimaea quintana) protein is Dephospho-CoA kinase.